The chain runs to 172 residues: Ribosome maturation factor RimM (172 aa).

The region spanning 96–168 is the PRC barrel domain; that stretch reads EGEFYYHQII…RVDVELMEGL (73 aa).

It belongs to the RimM family. Binds ribosomal protein uS19.

The protein resides in the cytoplasm. In terms of biological role, an accessory protein needed during the final step in the assembly of 30S ribosomal subunit, possibly for assembly of the head region. Essential for efficient processing of 16S rRNA. May be needed both before and after RbfA during the maturation of 16S rRNA. It has affinity for free ribosomal 30S subunits but not for 70S ribosomes. In Streptococcus pyogenes serotype M3 (strain ATCC BAA-595 / MGAS315), this protein is Ribosome maturation factor RimM.